The following is a 262-amino-acid chain: Small ribosomal subunit protein eS4 (262 aa).

The S4 RNA-binding domain occupies 42–105 (LPLVVFLRNR…NEHFRLVYDV (64 aa)). A KOW domain is found at 178–211 (GRLVMVTGGRNLGRVGVIVHREKHEGGFDLVHIK).

This sequence belongs to the eukaryotic ribosomal protein eS4 family. Component of the small ribosomal subunit. Mature ribosomes consist of a small (40S) and a large (60S) subunit. The 40S subunit contains about 32 different proteins and 1 molecule of RNA (18S). The 60S subunit contains 45 different proteins and 3 molecules of RNA (25S, 5.8S and 5S).

The protein localises to the cytoplasm. In terms of biological role, component of the ribosome, a large ribonucleoprotein complex responsible for the synthesis of proteins in the cell. The small ribosomal subunit (SSU) binds messenger RNAs (mRNAs) and translates the encoded message by selecting cognate aminoacyl-transfer RNA (tRNA) molecules. The large subunit (LSU) contains the ribosomal catalytic site termed the peptidyl transferase center (PTC), which catalyzes the formation of peptide bonds, thereby polymerizing the amino acids delivered by tRNAs into a polypeptide chain. The nascent polypeptides leave the ribosome through a tunnel in the LSU and interact with protein factors that function in enzymatic processing, targeting, and the membrane insertion of nascent chains at the exit of the ribosomal tunnel. This chain is Small ribosomal subunit protein eS4 (RPS42), found in Candida albicans (strain SC5314 / ATCC MYA-2876) (Yeast).